We begin with the raw amino-acid sequence, 316 residues long: Protein U25 (316 aa).

This sequence belongs to the herpesviridae US22 family.

This chain is Protein U25 (U25), found in Human herpesvirus 6B (HHV-6 variant B).